The chain runs to 78 residues: Acyl carrier protein (78 aa).

A Carrier domain is found at 2–77 (SEIASRVKAI…DAVSYIEEHA (76 aa)). S37 carries the post-translational modification O-(pantetheine 4'-phosphoryl)serine.

It belongs to the acyl carrier protein (ACP) family. 4'-phosphopantetheine is transferred from CoA to a specific serine of apo-ACP by AcpS. This modification is essential for activity because fatty acids are bound in thioester linkage to the sulfhydryl of the prosthetic group.

It is found in the cytoplasm. It participates in lipid metabolism; fatty acid biosynthesis. Its function is as follows. Carrier of the growing fatty acid chain in fatty acid biosynthesis. This chain is Acyl carrier protein, found in Bacteroides thetaiotaomicron (strain ATCC 29148 / DSM 2079 / JCM 5827 / CCUG 10774 / NCTC 10582 / VPI-5482 / E50).